The sequence spans 342 residues: GTPase Obg (342 aa).

An Obg domain is found at 1-159; sequence MQFIDQAQIE…KLLRLELKLL (159 aa). In terms of domain architecture, OBG-type G spans 160 to 330; the sequence is AEVGIIGLPN…MLQEVWGILD (171 aa). GTP-binding positions include 166 to 173, 191 to 195, 213 to 216, 280 to 283, and 311 to 313; these read GLPNAGKS, FTTLI, DIPG, NKID, and SAV. Residues S173 and T193 each contribute to the Mg(2+) site.

It belongs to the TRAFAC class OBG-HflX-like GTPase superfamily. OBG GTPase family. As to quaternary structure, monomer. Mg(2+) serves as cofactor.

The protein localises to the cytoplasm. Functionally, an essential GTPase which binds GTP, GDP and possibly (p)ppGpp with moderate affinity, with high nucleotide exchange rates and a fairly low GTP hydrolysis rate. Plays a role in control of the cell cycle, stress response, ribosome biogenesis and in those bacteria that undergo differentiation, in morphogenesis control. The chain is GTPase Obg from Trichormus variabilis (strain ATCC 29413 / PCC 7937) (Anabaena variabilis).